A 372-amino-acid polypeptide reads, in one-letter code: Glutamate 5-kinase (372 aa).

K14 contacts ATP. Residues S54, D141, and N153 each coordinate substrate. ATP is bound by residues 173 to 174 and 215 to 221; these read TD and TGGMATK. The PUA domain maps to 280 to 358; that stretch reads KGKLVLDVGA…DEIESLLGYD (79 aa).

Belongs to the glutamate 5-kinase family.

It is found in the cytoplasm. It carries out the reaction L-glutamate + ATP = L-glutamyl 5-phosphate + ADP. Its pathway is amino-acid biosynthesis; L-proline biosynthesis; L-glutamate 5-semialdehyde from L-glutamate: step 1/2. In terms of biological role, catalyzes the transfer of a phosphate group to glutamate to form L-glutamate 5-phosphate. The chain is Glutamate 5-kinase from Shewanella woodyi (strain ATCC 51908 / MS32).